Consider the following 233-residue polypeptide: Transcriptional regulatory protein PrrA (233 aa).

One can recognise a Response regulatory domain in the interval 9–123 (RVLVVDDDSD…ELVARVKALL (115 aa)). At D58 the chain carries 4-aspartylphosphate. A DNA-binding region (ompR/PhoB-type) is located at residues 134 to 232 (SETIAVGPLE…VRGVGFVLRM (99 aa)).

Phosphorylated by PrrB at Asp-58.

It localises to the cytoplasm. Its function is as follows. Member of the two-component regulatory system PrrB/PrrA that is involved specifically in early intracellular multiplication of Mycobacterium and is essential for its viability. Upon phosphorylation by PrrB, functions as a transcription regulator by direct binding to promoter regions of target genes to positively regulate their expression. Autoregulates its own expression. The chain is Transcriptional regulatory protein PrrA (prrA) from Mycobacterium leprae (strain TN).